Consider the following 243-residue polypeptide: 1-(5-phosphoribosyl)-5-[(5-phosphoribosylamino)methylideneamino] imidazole-4-carboxamide isomerase (243 aa).

Residue aspartate 8 is the Proton acceptor of the active site. Aspartate 129 functions as the Proton donor in the catalytic mechanism.

It belongs to the HisA/HisF family.

The protein localises to the cytoplasm. It carries out the reaction 1-(5-phospho-beta-D-ribosyl)-5-[(5-phospho-beta-D-ribosylamino)methylideneamino]imidazole-4-carboxamide = 5-[(5-phospho-1-deoxy-D-ribulos-1-ylimino)methylamino]-1-(5-phospho-beta-D-ribosyl)imidazole-4-carboxamide. It functions in the pathway amino-acid biosynthesis; L-histidine biosynthesis; L-histidine from 5-phospho-alpha-D-ribose 1-diphosphate: step 4/9. The chain is 1-(5-phosphoribosyl)-5-[(5-phosphoribosylamino)methylideneamino] imidazole-4-carboxamide isomerase from Geobacter sp. (strain M21).